Consider the following 431-residue polypeptide: Adenylosuccinate synthetase (431 aa).

GTP is bound by residues 13–19 (GDEGKGK) and 41–43 (GHT). Catalysis depends on Asp14, which acts as the Proton acceptor. Mg(2+)-binding residues include Asp14 and Gly41. IMP is bound by residues 14 to 17 (DEGK), 39 to 42 (NAGH), Thr130, Arg144, Gln225, Thr240, and Arg304. His42 acts as the Proton donor in catalysis. Position 300–306 (300–306 (ATTGRKR)) interacts with substrate. Residues Arg306, 332–334 (KLD), and 415–417 (STG) contribute to the GTP site.

It belongs to the adenylosuccinate synthetase family. In terms of assembly, homodimer. Mg(2+) serves as cofactor.

Its subcellular location is the cytoplasm. It carries out the reaction IMP + L-aspartate + GTP = N(6)-(1,2-dicarboxyethyl)-AMP + GDP + phosphate + 2 H(+). It functions in the pathway purine metabolism; AMP biosynthesis via de novo pathway; AMP from IMP: step 1/2. Functionally, plays an important role in the de novo pathway of purine nucleotide biosynthesis. Catalyzes the first committed step in the biosynthesis of AMP from IMP. The sequence is that of Adenylosuccinate synthetase from Shewanella frigidimarina (strain NCIMB 400).